A 79-amino-acid polypeptide reads, in one-letter code: ATP synthase subunit c (79 aa).

2 consecutive transmembrane segments (helical) span residues 11 to 31 (IAVA…IGIL) and 53 to 73 (FFVV…LGLY).

Belongs to the ATPase C chain family. In terms of assembly, F-type ATPases have 2 components, F(1) - the catalytic core - and F(0) - the membrane proton channel. F(1) has five subunits: alpha(3), beta(3), gamma(1), delta(1), epsilon(1). F(0) has three main subunits: a(1), b(2) and c(10-14). The alpha and beta chains form an alternating ring which encloses part of the gamma chain. F(1) is attached to F(0) by a central stalk formed by the gamma and epsilon chains, while a peripheral stalk is formed by the delta and b chains.

The protein localises to the cell membrane. F(1)F(0) ATP synthase produces ATP from ADP in the presence of a proton or sodium gradient. F-type ATPases consist of two structural domains, F(1) containing the extramembraneous catalytic core and F(0) containing the membrane proton channel, linked together by a central stalk and a peripheral stalk. During catalysis, ATP synthesis in the catalytic domain of F(1) is coupled via a rotary mechanism of the central stalk subunits to proton translocation. Its function is as follows. Key component of the F(0) channel; it plays a direct role in translocation across the membrane. A homomeric c-ring of between 10-14 subunits forms the central stalk rotor element with the F(1) delta and epsilon subunits. The sequence is that of ATP synthase subunit c from Buchnera aphidicola subsp. Schizaphis graminum (strain Sg).